Reading from the N-terminus, the 482-residue chain is Aspartyl/glutamyl-tRNA(Asn/Gln) amidotransferase subunit B (482 aa).

The protein belongs to the GatB/GatE family. GatB subfamily. In terms of assembly, heterotrimer of A, B and C subunits.

It carries out the reaction L-glutamyl-tRNA(Gln) + L-glutamine + ATP + H2O = L-glutaminyl-tRNA(Gln) + L-glutamate + ADP + phosphate + H(+). The enzyme catalyses L-aspartyl-tRNA(Asn) + L-glutamine + ATP + H2O = L-asparaginyl-tRNA(Asn) + L-glutamate + ADP + phosphate + 2 H(+). Functionally, allows the formation of correctly charged Asn-tRNA(Asn) or Gln-tRNA(Gln) through the transamidation of misacylated Asp-tRNA(Asn) or Glu-tRNA(Gln) in organisms which lack either or both of asparaginyl-tRNA or glutaminyl-tRNA synthetases. The reaction takes place in the presence of glutamine and ATP through an activated phospho-Asp-tRNA(Asn) or phospho-Glu-tRNA(Gln). This chain is Aspartyl/glutamyl-tRNA(Asn/Gln) amidotransferase subunit B, found in Thermotoga neapolitana (strain ATCC 49049 / DSM 4359 / NBRC 107923 / NS-E).